Reading from the N-terminus, the 728-residue chain is Ribosome biogenesis protein bop1-A (728 aa).

Residues 1-114 (MKRGSQGEAG…ENDSSDEEDI (114 aa)) form a disordered region. Over residues 55-67 (SDDEEDHWSEEEE) the composition is skewed to acidic residues. The segment covering 68–77 (NPGKSPKEII) has biased composition (basic and acidic residues). WD repeat units lie at residues 393–432 (GHKD…CMKS), 434–474 (VLEG…RLLC), 514–556 (KHQK…SQNP), 559–597 (KNKG…LTKK), 600–639 (TNCK…KPYK), 643–682 (HHKK…DLLQ), and 698–728 (HRDL…RLFT).

It belongs to the WD repeat BOP1/ERB1 family. Component of the PeBoW complex, composed of bop1, pes1 and wdr12. The complex is held together by bop1, which interacts with pes1 via its N-terminal domain and with wdr12 via a high-affinity interaction between the seven-bladed beta-propeller domains of the 2 proteins. The PeBoW complex associates with the 66S pre-ribosome.

The protein localises to the nucleus. The protein resides in the nucleolus. It is found in the nucleoplasm. In terms of biological role, component of the PeBoW complex, which is required for maturation of 28S and 5.8S ribosomal RNAs and formation of the 60S ribosome. The polypeptide is Ribosome biogenesis protein bop1-A (bop1-a) (Xenopus laevis (African clawed frog)).